The sequence spans 425 residues: Ribosome biogenesis protein WDR12 homolog (425 aa).

The segment at I7 to E93 is ubiquitin-like (UBL) domain. WD repeat units lie at residues I105–T142, G145–E187, G194–D233, G265–Q303, A305–V344, S350–Y390, and G394–K425. The disordered stretch occupies residues P227 to K253. Basic and acidic residues predominate over residues D231–K253.

This sequence belongs to the WD repeat WDR12/YTM1 family.

It localises to the nucleus. The protein resides in the nucleolus. Its subcellular location is the nucleoplasm. Functionally, required for maturation of ribosomal RNAs and formation of the large ribosomal subunit. The sequence is that of Ribosome biogenesis protein WDR12 homolog from Ixodes scapularis (Black-legged tick).